The primary structure comprises 355 residues: Anthranilate phosphoribosyltransferase (355 aa).

5-phospho-alpha-D-ribose 1-diphosphate is bound by residues Gly102, 105 to 106 (GD), Ser110, 112 to 115 (NIST), 130 to 138 (KHGNRSVSS), and Ser142. Gly102 is a binding site for anthranilate. Ser114 contributes to the Mg(2+) binding site. An anthranilate-binding site is contributed by Asn133. Arg188 serves as a coordination point for anthranilate. Asp246 and Glu247 together coordinate Mg(2+).

Belongs to the anthranilate phosphoribosyltransferase family. As to quaternary structure, homodimer. It depends on Mg(2+) as a cofactor.

The enzyme catalyses N-(5-phospho-beta-D-ribosyl)anthranilate + diphosphate = 5-phospho-alpha-D-ribose 1-diphosphate + anthranilate. The protein operates within amino-acid biosynthesis; L-tryptophan biosynthesis; L-tryptophan from chorismate: step 2/5. Its function is as follows. Catalyzes the transfer of the phosphoribosyl group of 5-phosphorylribose-1-pyrophosphate (PRPP) to anthranilate to yield N-(5'-phosphoribosyl)-anthranilate (PRA). The chain is Anthranilate phosphoribosyltransferase from Pectobacterium carotovorum subsp. carotovorum (strain PC1).